Reading from the N-terminus, the 81-residue chain is MMPSSSFQQTPKPVDLDDPRFEQYDCLPCRLVGAGAFTGLGIYAYSQSRIPLNTPNYKLKRFGILGMAYGFILTGVYRLFQ.

This sequence to yeast YDL157C.

The protein resides in the mitochondrion. This is an uncharacterized protein from Schizosaccharomyces pombe (strain 972 / ATCC 24843) (Fission yeast).